The chain runs to 184 residues: ATP synthase subunit delta (184 aa).

It belongs to the ATPase delta chain family. F-type ATPases have 2 components, F(1) - the catalytic core - and F(0) - the membrane proton channel. F(1) has five subunits: alpha(3), beta(3), gamma(1), delta(1), epsilon(1). F(0) has three main subunits: a(1), b(2) and c(10-14). The alpha and beta chains form an alternating ring which encloses part of the gamma chain. F(1) is attached to F(0) by a central stalk formed by the gamma and epsilon chains, while a peripheral stalk is formed by the delta and b chains.

The protein localises to the cell inner membrane. F(1)F(0) ATP synthase produces ATP from ADP in the presence of a proton or sodium gradient. F-type ATPases consist of two structural domains, F(1) containing the extramembraneous catalytic core and F(0) containing the membrane proton channel, linked together by a central stalk and a peripheral stalk. During catalysis, ATP synthesis in the catalytic domain of F(1) is coupled via a rotary mechanism of the central stalk subunits to proton translocation. Its function is as follows. This protein is part of the stalk that links CF(0) to CF(1). It either transmits conformational changes from CF(0) to CF(1) or is implicated in proton conduction. This is ATP synthase subunit delta from Rickettsia peacockii (strain Rustic).